A 182-amino-acid polypeptide reads, in one-letter code: Bifunctional protein PyrR (182 aa).

The PRPP-binding signature appears at 98–110; that stretch reads VVLVDDVLFTGRS.

This sequence belongs to the purine/pyrimidine phosphoribosyltransferase family. PyrR subfamily.

It carries out the reaction UMP + diphosphate = 5-phospho-alpha-D-ribose 1-diphosphate + uracil. Regulates the transcription of the pyrimidine nucleotide (pyr) operon in response to exogenous pyrimidines. Its function is as follows. Also displays a weak uracil phosphoribosyltransferase activity which is not physiologically significant. The protein is Bifunctional protein PyrR of Dehalococcoides mccartyi (strain ATCC BAA-2100 / JCM 16839 / KCTC 5957 / BAV1).